The chain runs to 175 residues: Bifunctional protein PyrR (175 aa).

Substrate is bound by residues 40–41 (TR), 102–110 (DDVLYTGRT), R135, and V159. The PRPP-binding motif lies at 98 to 110 (VIIIDDVLYTGRT).

Belongs to the purine/pyrimidine phosphoribosyltransferase family. PyrR subfamily. In terms of assembly, homodimer and homohexamer; in equilibrium.

The catalysed reaction is UMP + diphosphate = 5-phospho-alpha-D-ribose 1-diphosphate + uracil. Its function is as follows. Regulates transcriptional attenuation of the pyrimidine nucleotide (pyr) operon by binding in a uridine-dependent manner to specific sites on pyr mRNA. This disrupts an antiterminator hairpin in the RNA and favors formation of a downstream transcription terminator, leading to a reduced expression of downstream genes. Also displays a weak uracil phosphoribosyltransferase activity which is not physiologically significant. The protein is Bifunctional protein PyrR of Staphylococcus aureus (strain MSSA476).